We begin with the raw amino-acid sequence, 429 residues long: Gamma-glutamyl phosphate reductase (429 aa).

This sequence belongs to the gamma-glutamyl phosphate reductase family.

It is found in the cytoplasm. The catalysed reaction is L-glutamate 5-semialdehyde + phosphate + NADP(+) = L-glutamyl 5-phosphate + NADPH + H(+). The protein operates within amino-acid biosynthesis; L-proline biosynthesis; L-glutamate 5-semialdehyde from L-glutamate: step 2/2. In terms of biological role, catalyzes the NADPH-dependent reduction of L-glutamate 5-phosphate into L-glutamate 5-semialdehyde and phosphate. The product spontaneously undergoes cyclization to form 1-pyrroline-5-carboxylate. The protein is Gamma-glutamyl phosphate reductase of Methylibium petroleiphilum (strain ATCC BAA-1232 / LMG 22953 / PM1).